The chain runs to 445 residues: 23S rRNA (uracil(1939)-C(5))-methyltransferase RlmD (445 aa).

The TRAM domain occupies 12–70 (SKQLSSKLSLNVTQLDHLGAGIAHHQGKIVFINGALPGETVQVQLTEQKKKFSRAKLLK). [4Fe-4S] cluster-binding residues include Cys83, Cys89, Cys92, and Cys171. S-adenosyl-L-methionine contacts are provided by Gln278, Phe307, Asn312, Glu328, Asp355, and Asp375. Cys401 acts as the Nucleophile in catalysis.

This sequence belongs to the class I-like SAM-binding methyltransferase superfamily. RNA M5U methyltransferase family. RlmD subfamily.

The catalysed reaction is uridine(1939) in 23S rRNA + S-adenosyl-L-methionine = 5-methyluridine(1939) in 23S rRNA + S-adenosyl-L-homocysteine + H(+). Its function is as follows. Catalyzes the formation of 5-methyl-uridine at position 1939 (m5U1939) in 23S rRNA. The chain is 23S rRNA (uracil(1939)-C(5))-methyltransferase RlmD from Shewanella piezotolerans (strain WP3 / JCM 13877).